The chain runs to 603 residues: Nuclear receptor subfamily 2 group C member 1 (603 aa).

The interval methionine 1–methionine 178 is required for interaction with KAT2B. The segment at residues phenylalanine 110–cysteine 185 is a DNA-binding region (nuclear receptor). NR C4-type zinc fingers lie at residues cysteine 113–cysteine 133 and cysteine 149–cysteine 173. Serine 197 and serine 215 each carry phosphoserine. Phosphothreonine is present on threonine 220. Threonine 222 carries the post-translational modification Phosphothreonine; by MAPK1. Residue lysine 250 forms a Glycyl lysine isopeptide (Lys-Gly) (interchain with G-Cter in SUMO2) linkage. The 243-residue stretch at glycine 348–glutamate 590 folds into the NR LBD domain. Residue serine 581 is modified to Phosphoserine; by PKC. The tract at residues proline 584 to isoleucine 603 is required for interaction with NRIP1. Residue lysine 588 forms a Glycyl lysine isopeptide (Lys-Gly) (interchain with G-Cter in SUMO2) linkage.

The protein belongs to the nuclear hormone receptor family. NR2 subfamily. As to quaternary structure, homodimer. Heterodimer; binds DNA as a heterodimer with NR2C2 required for chromatin remodeling and for binding to promoter regions such as globin DR1 repeats. Interacts with NRIP1 (via its LXXLL motifs); the interaction provides corepressor activity. Interacts with HDAC3 (via the DNA-binding domain). Interacts with HDAC4 (via the DNA-binding domain). Interacts with PIAS1; the interaction is required for sumoylation of NR2C1. Interacts with UBE2I; the interaction is required for sumoylation of NR2C1. Interacts with KAT2B; the interaction acts as a corepressor of gene expression. Interacts with ESR1; the interaction prevents homodimerization of ESR1 and suppresses its transcriptional activity and cell growth. Sumoylation requires both PIAS1 and UBE2I. Sumoylation appears to dissociate NR2C1 from the PML nuclear bodies. Enhances the interaction with NRIP1 but inhibits interaction with KAT2B. In proliferating cells, stimulation by all-trans retinoic acid, activation of MAPK1-mediated phosphorylation and recruitment to PML bodies with subsequent sumoylation, suppresses OCT4 expression. Post-translationally, phosphorylated on several serine and threonine residues. Phosphorylation on Thr-222, stimulated by all-trans retinoic acid (atRA) mediates PML location and sumoylation in proliferating cells which then modulates its association with effector molecules, KAT2B and NRIP1. Phosphorylation on Ser-581 by PKC is important for protein stability and function as activator of RARB.

The protein localises to the nucleus. It is found in the PML body. Orphan nuclear receptor. Binds the IR7 element in the promoter of its own gene in an autoregulatory negative feedback mechanism. Primarily repressor of a broad range of genes. Binds to hormone response elements (HREs) consisting of two 5'-AGGTCA-3' half site direct repeat consensus sequences. Together with NR2C2, forms the core of the DRED (direct repeat erythroid-definitive) complex that represses embryonic and fetal globin transcription. Also activator of OCT4 gene expression. May be involved in stem cell proliferation and differentiation. Mediator of retinoic acid-regulated preadipocyte proliferation. This chain is Nuclear receptor subfamily 2 group C member 1 (NR2C1), found in Homo sapiens (Human).